Reading from the N-terminus, the 372-residue chain is Spermidine/putrescine import ATP-binding protein PotA (372 aa).

Residues 11-241 (IELRSIKKSY…PANLFVARFI (231 aa)) form the ABC transporter domain. 43 to 50 (GPSGCGKT) is an ATP binding site.

Belongs to the ABC transporter superfamily. Spermidine/putrescine importer (TC 3.A.1.11.1) family. The complex is composed of two ATP-binding proteins (PotA), two transmembrane proteins (PotB and PotC) and a solute-binding protein (PotD).

Its subcellular location is the cell inner membrane. The enzyme catalyses ATP + H2O + polyamine-[polyamine-binding protein]Side 1 = ADP + phosphate + polyamineSide 2 + [polyamine-binding protein]Side 1.. In terms of biological role, part of the ABC transporter complex PotABCD involved in spermidine/putrescine import. Responsible for energy coupling to the transport system. The polypeptide is Spermidine/putrescine import ATP-binding protein PotA (Haemophilus influenzae (strain 86-028NP)).